A 241-amino-acid chain; its full sequence is MAKQPHLLVEEGDVHEIAIIPGDPGRVDRIADLCDDSELVAQNREYKIVNASYDGTDLTICSTGIGCPSAAIAVEELSRVGVETFLRCGTCGALQADMEVGDMVVATGAAKEEGTSKRYESVEYPAVPDYDALTELVGAAEDNDEEIHVGPIVSDDAFYNESDEYVDDWNDANLLAIEMEAATVFALARRKGLRAGAICTVDGNLVAGNQKGADSDDELPEKAKDNVERAIRITLNAVTAL.

Belongs to the PNP/UDP phosphorylase family.

It catalyses the reaction guanosine + phosphate = alpha-D-ribose 1-phosphate + guanine. The enzyme catalyses a purine D-ribonucleoside + phosphate = a purine nucleobase + alpha-D-ribose 1-phosphate. The catalysed reaction is inosine + phosphate = alpha-D-ribose 1-phosphate + hypoxanthine. It carries out the reaction adenosine + phosphate = alpha-D-ribose 1-phosphate + adenine. Its activity is regulated as follows. Activity is higher at low KCl concentrations. Its function is as follows. Phosphorylase involved in the non-carboxylating pentose bisphosphate pathway, a nucleoside degradation pathway present in some halophilic archaea. Catalyzes the phosphorolytic cleavage of guanosine to guanine and ribose-1-phosphate (R1P). Exhibits the highest activity toward guanosine, but also shows lower activity against inosine and adenosine. The protein is Guanosine phosphorylase of Halorubrum lacusprofundi (strain ATCC 49239 / DSM 5036 / JCM 8891 / ACAM 34).